A 472-amino-acid chain; its full sequence is Na(+)/H(+) antiporter NhaA 1 (472 aa).

Transmembrane regions (helical) follow at residues Thr-34–Trp-54, Gly-86–Gly-106, Leu-116–Ala-136, Gly-146–Gly-166, Val-175–Phe-195, Thr-203–Phe-223, Ile-227–Ala-247, Pro-324–Asp-344, Val-353–Phe-373, Val-394–Leu-414, and Leu-428–Ile-448.

The protein belongs to the NhaA Na(+)/H(+) (TC 2.A.33) antiporter family.

It localises to the cell inner membrane. The enzyme catalyses Na(+)(in) + 2 H(+)(out) = Na(+)(out) + 2 H(+)(in). In terms of biological role, na(+)/H(+) antiporter that extrudes sodium in exchange for external protons. This Pseudoalteromonas atlantica (strain T6c / ATCC BAA-1087) protein is Na(+)/H(+) antiporter NhaA 1.